Reading from the N-terminus, the 358-residue chain is MKVGVALSGGVDSAVALYLLLKEGHEVKAFHMKTKEDEFFIRKEIKKKVCCSPSDTADAMRIAHFLGVEIEIVDVKEIFREKVIEPFKSDLLKGLTPNPCVHCNRFVKFGYLMDYVLNQGFDAFASGHYARIEFSEKYGRKVIKKGVDLKKDQSYFLARIEPWRIERLIFPNGIYTKEEIRKIAEEAGIHVAKKQESQDVCFIPDGSIENFLKDEGITLKEGDLITPEGEVVGRHFGYPLYTIGQRKGFKIEKFGRRYYVRGKIPEKNVVVVSDLEDVFFSGLIAEDPVWHVEVPEEFKCVCRVRKKSEEAPAVVKLRDNEVEVRFEKKVFAVTPGQIAAFYDGDTLLGGAIIKEGIR.

ATP-binding positions include 6–13 (ALSGGVDS) and Met-32. Cys-103 serves as the catalytic Nucleophile. Cys-103 and Cys-201 are joined by a disulfide. Gly-127 serves as a coordination point for ATP. The interaction with tRNA stretch occupies residues 151–153 (KDQ). Catalysis depends on Cys-201, which acts as the Cysteine persulfide intermediate.

It belongs to the MnmA/TRMU family.

The protein localises to the cytoplasm. The enzyme catalyses S-sulfanyl-L-cysteinyl-[protein] + uridine(34) in tRNA + AH2 + ATP = 2-thiouridine(34) in tRNA + L-cysteinyl-[protein] + A + AMP + diphosphate + H(+). Its function is as follows. Catalyzes the 2-thiolation of uridine at the wobble position (U34) of tRNA, leading to the formation of s(2)U34. The polypeptide is tRNA-specific 2-thiouridylase MnmA (Thermotoga petrophila (strain ATCC BAA-488 / DSM 13995 / JCM 10881 / RKU-1)).